Reading from the N-terminus, the 777-residue chain is Nuclear autoantigenic sperm protein (777 aa).

Residue A2 is modified to N-acetylalanine. N6-acetyllysine is present on K34. The TPR 1 repeat unit spans residues 44-77; that stretch reads AKKLLGLGQKHLVMGDIPAAVNAFQEAASLLGKK. Residues 117 to 128 are histone-binding; the sequence is EEEEGEKTEEES. Residue T124 is modified to Phosphothreonine. At S128 the chain carries Phosphoserine. Composition is skewed to basic and acidic residues over residues 152–186, 227–259, and 267–276; these read MGEK…REDM, VTSK…EKGG, and IEEKPKEASK. The segment at 152 to 496 is disordered; that stretch reads MGEKEAQKTE…ALENKSLQEN (345 aa). A histone-binding region spans residues 211 to 244; sequence EEGKGAAAPEGLSEAEVTSKKPDQEIPGAEEGKS. The residue at position 243 (K243) is an N6-acetyllysine. At S244 the chain carries Phosphoserine. K285 carries the N6-acetyllysine modification. A compositionally biased stretch (basic and acidic residues) spans 303-319; the sequence is DEPKEQVAASESERGKA. Position 312 is a phosphoserine (S312). A compositionally biased stretch (low complexity) spans 342–353; sequence AADASAAEAGSE. Phosphoserine is present on residues S399, S411, and S440. Positions 458–501 are histone-binding; it reads EQMKEGEETEGSEEEDKENDKAEETLNDSALENKSLQENEEEEI. A compositionally biased stretch (acidic residues) spans 464–474; it reads EETEGSEEEDK. T466 carries the phosphothreonine modification. S469, S486, and S492 each carry phosphoserine. The segment covering 484–493 has biased composition (polar residues); sequence NDSALENKSL. TPR repeat units follow at residues 531-564 and 573-606; these read AQAH…QEQY and AETH…IEKR. Positions 593 to 648 form a coiled coil; that stretch reads VAQFSKSIEVIEKRMAVLNEQMKEAEGSPTEYEKEIEELKELLPEIREKIEDAKES. Residue S651 is modified to Phosphoserine. The segment covering 667-681 has biased composition (low complexity); it reads STSGFTPSGGSSSVS. The segment at 667-777 is disordered; that stretch reads STSGFTPSGG…AGATVESTAC (111 aa). T672 is modified (phosphothreonine). 2 positions are modified to phosphoserine: S694 and S695. Positions 705 to 711 match the Nuclear localization signal motif; sequence VRKKRKP. The span at 710–728 shows a compositional bias: basic and acidic residues; it reads KPEEESPRKDDAKKAKQEP. Residue S715 is modified to Phosphoserine. A Glycyl lysine isopeptide (Lys-Gly) (interchain with G-Cter in SUMO1) cross-link involves residue K725. A Phosphoserine modification is found at S734.

Belongs to the NASP family. Binds to linker H1 histones. Interacts with histones H2A, H2B, H3 and H4. Interacts with histone H3.3. Interacts with histones H3 and H4; NASP is a histone chaperone that stabilizes and maintains a soluble pool of histone H3-H4 dimers. Interacts with ASF1A and ASF1B; the interaction is probably indirect and mediated by H3-H4. Also binds to HSP90 in the cytoplasm. This interaction stimulates binding of NASP to H1-6/H1T.

The protein resides in the cytoplasm. The protein localises to the nucleus. Its function is as follows. Component of the histone chaperone network. Binds and stabilizes histone H3-H4 not bound to chromatin to maintain a soluble reservoir and modulate degradation by chaperone-mediated autophagy. Required for DNA replication, normal cell cycle progression and cell proliferation. Forms a cytoplasmic complex with HSP90 and H1 linker histones and stimulates HSP90 ATPase activity. NASP and H1 histone are subsequently released from the complex and translocate to the nucleus where the histone is released for binding to DNA. In Bos taurus (Bovine), this protein is Nuclear autoantigenic sperm protein.